The sequence spans 571 residues: Urease subunit alpha (571 aa).

The Urease domain occupies 133–571 (GGIDTHIHFI…LPLAQRYFLF (439 aa)). Residues His138, His140, and Lys221 each coordinate Ni(2+). Lys221 bears the N6-carboxylysine mark. Substrate is bound at residue His223. Ni(2+) contacts are provided by His250 and His276. His324 functions as the Proton donor in the catalytic mechanism. Asp364 contacts Ni(2+).

This sequence belongs to the metallo-dependent hydrolases superfamily. Urease alpha subunit family. As to quaternary structure, heterotrimer of UreA (gamma), UreB (beta) and UreC (alpha) subunits. Three heterotrimers associate to form the active enzyme. Requires Ni cation as cofactor. Post-translationally, carboxylation allows a single lysine to coordinate two nickel ions.

It is found in the cytoplasm. It catalyses the reaction urea + 2 H2O + H(+) = hydrogencarbonate + 2 NH4(+). Its pathway is nitrogen metabolism; urea degradation; CO(2) and NH(3) from urea (urease route): step 1/1. The chain is Urease subunit alpha from Corynebacterium efficiens (strain DSM 44549 / YS-314 / AJ 12310 / JCM 11189 / NBRC 100395).